We begin with the raw amino-acid sequence, 194 residues long: 3-isopropylmalate dehydratase small subunit (194 aa).

It belongs to the LeuD family. LeuD type 1 subfamily. In terms of assembly, heterodimer of LeuC and LeuD.

The enzyme catalyses (2R,3S)-3-isopropylmalate = (2S)-2-isopropylmalate. The protein operates within amino-acid biosynthesis; L-leucine biosynthesis; L-leucine from 3-methyl-2-oxobutanoate: step 2/4. Its function is as follows. Catalyzes the isomerization between 2-isopropylmalate and 3-isopropylmalate, via the formation of 2-isopropylmaleate. The polypeptide is 3-isopropylmalate dehydratase small subunit (Leuconostoc mesenteroides subsp. mesenteroides (strain ATCC 8293 / DSM 20343 / BCRC 11652 / CCM 1803 / JCM 6124 / NCDO 523 / NBRC 100496 / NCIMB 8023 / NCTC 12954 / NRRL B-1118 / 37Y)).